Reading from the N-terminus, the 260-residue chain is Carbonic anhydrase 3 (260 aa).

N-acetylalanine is present on Ala-2. The Alpha-carbonic anhydrase domain occupies 3 to 259 (KEWGYASHNG…IKGRVVRASF (257 aa)). Residues Ser-29, Ser-43, Ser-48, Ser-50, and Ser-55 each carry the phosphoserine modification. Positions 64–67 (KTCR) are involved in proton transfer. Thr-73 is modified (phosphothreonine). Residues His-94, His-96, and His-119 each contribute to the Zn(2+) site. Tyr-127 carries the post-translational modification Phosphotyrosine. A Phosphothreonine modification is found at Thr-129. Cys-182 and Cys-187 each carry S-glutathionyl cysteine. 198–199 (TT) contributes to the substrate binding site. Phosphothreonine is present on Thr-216. Ser-219 carries the post-translational modification Phosphoserine.

This sequence belongs to the alpha-carbonic anhydrase family. Requires Zn(2+) as cofactor. Post-translationally, S-thiolated both by thiol-disulfide exchange with glutathione disulfide and by oxyradical-initiated S-thiolation with reduced glutathione. In terms of processing, S-glutathionylated in hepatocytes under oxidative stress. Expressed in liver and muscle.

The protein localises to the cytoplasm. It catalyses the reaction hydrogencarbonate + H(+) = CO2 + H2O. With respect to regulation, inhibited by acetazolamide. Reversible hydration of carbon dioxide. This Rattus norvegicus (Rat) protein is Carbonic anhydrase 3 (Ca3).